Here is a 381-residue protein sequence, read N- to C-terminus: Hps1-dma1 cluster transcription factor tfc7 (381 aa).

Positions 10 to 37 (CDHCSATKIKCTQERPQCTRCRALGRDC) form a DNA-binding region, zn(2)-C6 fungal-type. The segment at 41–88 (RSLRAGKPPRSSQGLNRKISNAPVLPRQNTPVSNPTSMSSKPEHWPTM) is disordered. Composition is skewed to polar residues over residues 50-59 (RSSQGLNRKI) and 67-80 (RQNT…SMSS).

The protein localises to the nucleus. Functionally, transcription factor that regulates the expression of the hps1-dma1 gene cluster that probably mediates the biosynthesis a derivative of cyclopiazonic acid (CPA). Further studies are required to whether the CPA-like hps1-dma1 cluster is functional or a non-functional relic reflecting evolution of D.septosporum. The sequence is that of Hps1-dma1 cluster transcription factor tfc7 (tfc7) from Dothistroma septosporum (strain NZE10 / CBS 128990) (Red band needle blight fungus).